The chain runs to 196 residues: ATP-dependent Clp protease proteolytic subunit (196 aa).

Ser-96 functions as the Nucleophile in the catalytic mechanism. His-121 is a catalytic residue.

This sequence belongs to the peptidase S14 family. As to quaternary structure, fourteen ClpP subunits assemble into 2 heptameric rings which stack back to back to give a disk-like structure with a central cavity, resembling the structure of eukaryotic proteasomes.

It is found in the cytoplasm. It carries out the reaction Hydrolysis of proteins to small peptides in the presence of ATP and magnesium. alpha-casein is the usual test substrate. In the absence of ATP, only oligopeptides shorter than five residues are hydrolyzed (such as succinyl-Leu-Tyr-|-NHMec, and Leu-Tyr-Leu-|-Tyr-Trp, in which cleavage of the -Tyr-|-Leu- and -Tyr-|-Trp bonds also occurs).. Functionally, cleaves peptides in various proteins in a process that requires ATP hydrolysis. Has a chymotrypsin-like activity. Plays a major role in the degradation of misfolded proteins. The chain is ATP-dependent Clp protease proteolytic subunit from Streptococcus gordonii (strain Challis / ATCC 35105 / BCRC 15272 / CH1 / DL1 / V288).